Here is a 913-residue protein sequence, read N- to C-terminus: DNA repair endonuclease XPF (913 aa).

Positions 1 to 454 are helicase-like; the sequence is MDRGISAVRK…EVWVNLRKGD (454 aa). Leucine-zipper regions lie at residues 233–254 and 270–298; these read LNAC…DLSL and LDPL…LQYL. Lys289 bears the N6-acetyllysine mark. Basic and acidic residues predominate over residues 453-476; sequence GDGPKRTMKSDKRPKDTKNKERAS. Disordered regions lie at residues 453–525 and 638–677; these read GDGP…CGGE and VVPE…HNGT. The Nuclear localization signal motif lies at 483–488; it reads KRKKRE. The span at 500-509 shows a compositional bias: acidic residues; sequence EPPEEGAAEE. Ser518 is subject to Phosphoserine. Basic and acidic residues predominate over residues 638–649; the sequence is VVPEEREGRDET. The interval 655–810 is nuclease; the sequence is RGTVSTDAPA…PSPHATAELF (156 aa). The ERCC4 domain occupies 680–760; sequence SIVVDMREFR…RPVLLIEFDA (81 aa). A hhH2, dimerization with ERCC1 region spans residues 834-902; the sequence is TLPESDKYNP…QLYDFLHTAY (69 aa).

It belongs to the XPF family. In terms of assembly, heterodimer composed of ERCC1 and ERCC4/XPF. Interacts with SLX4/BTBD12; this interaction is direct and links the ERCC1-ERCC4/XPF complex to SLX4, which may coordinate the action of the structure-specific endonuclease during DNA repair. Requires Mg(2+) as cofactor.

It is found in the nucleus. The protein resides in the chromosome. In terms of biological role, catalytic component of a structure-specific DNA repair endonuclease responsible for the 5-prime incision during DNA repair, and which is essential for nucleotide excision repair (NER) and interstrand cross-link (ICL) repair. The sequence is that of DNA repair endonuclease XPF from Cricetulus griseus (Chinese hamster).